A 558-amino-acid polypeptide reads, in one-letter code: Membrane protein insertase YidC (558 aa).

5 consecutive transmembrane segments (helical) span residues 3-23, 364-384, 438-458, 477-497, and 508-528; these read IKRT…FDNW, FVGN…AVFF, LPVV…LASV, PYFI…KLNP, and MMFM…GLVL.

Belongs to the OXA1/ALB3/YidC family. Type 1 subfamily. In terms of assembly, interacts with the Sec translocase complex via SecD. Specifically interacts with transmembrane segments of nascent integral membrane proteins during membrane integration.

It localises to the cell inner membrane. Functionally, required for the insertion and/or proper folding and/or complex formation of integral membrane proteins into the membrane. Involved in integration of membrane proteins that insert both dependently and independently of the Sec translocase complex, as well as at least some lipoproteins. Aids folding of multispanning membrane proteins. The sequence is that of Membrane protein insertase YidC from Burkholderia pseudomallei (strain K96243).